Consider the following 260-residue polypeptide: Thiazole synthase (260 aa).

K96 functions as the Schiff-base intermediate with DXP in the catalytic mechanism. Residues G157, 184 to 185, and 206 to 207 each bind 1-deoxy-D-xylulose 5-phosphate; these read AG and NT.

The protein belongs to the ThiG family. In terms of assembly, homotetramer. Forms heterodimers with either ThiH or ThiS.

The protein localises to the cytoplasm. The catalysed reaction is [ThiS sulfur-carrier protein]-C-terminal-Gly-aminoethanethioate + 2-iminoacetate + 1-deoxy-D-xylulose 5-phosphate = [ThiS sulfur-carrier protein]-C-terminal Gly-Gly + 2-[(2R,5Z)-2-carboxy-4-methylthiazol-5(2H)-ylidene]ethyl phosphate + 2 H2O + H(+). It functions in the pathway cofactor biosynthesis; thiamine diphosphate biosynthesis. Functionally, catalyzes the rearrangement of 1-deoxy-D-xylulose 5-phosphate (DXP) to produce the thiazole phosphate moiety of thiamine. Sulfur is provided by the thiocarboxylate moiety of the carrier protein ThiS. In vitro, sulfur can be provided by H(2)S. This chain is Thiazole synthase, found in Rhodopseudomonas palustris (strain BisA53).